Here is a 343-residue protein sequence, read N- to C-terminus: Tetraacyldisaccharide 4'-kinase (343 aa).

55-62 (TVGGEGKT) is an ATP binding site.

The protein belongs to the LpxK family.

The enzyme catalyses a lipid A disaccharide + ATP = a lipid IVA + ADP + H(+). The protein operates within glycolipid biosynthesis; lipid IV(A) biosynthesis; lipid IV(A) from (3R)-3-hydroxytetradecanoyl-[acyl-carrier-protein] and UDP-N-acetyl-alpha-D-glucosamine: step 6/6. Functionally, transfers the gamma-phosphate of ATP to the 4'-position of a tetraacyldisaccharide 1-phosphate intermediate (termed DS-1-P) to form tetraacyldisaccharide 1,4'-bis-phosphate (lipid IVA). The chain is Tetraacyldisaccharide 4'-kinase from Chelativorans sp. (strain BNC1).